Here is a 216-residue protein sequence, read N- to C-terminus: Large ribosomal subunit protein uL3 (216 aa).

The tract at residues 132-157 is disordered; that stretch reads FRGQGASHGTQAVHRKPGSIGGCATP.

Belongs to the universal ribosomal protein uL3 family. As to quaternary structure, part of the 50S ribosomal subunit. Forms a cluster with proteins L14 and L19.

Functionally, one of the primary rRNA binding proteins, it binds directly near the 3'-end of the 23S rRNA, where it nucleates assembly of the 50S subunit. The chain is Large ribosomal subunit protein uL3 from Saccharopolyspora erythraea (strain ATCC 11635 / DSM 40517 / JCM 4748 / NBRC 13426 / NCIMB 8594 / NRRL 2338).